The sequence spans 187 residues: PBAN-type neuropeptides (187 aa).

A signal peptide spans 1–22 (MSRFYFFFNLICLYLAIKSALS). Positions 23–64 (AELDTNDQKYADLRTTGRGESPDSTGPDSDTLRRDDGAEGLN) are excised as a propeptide. Positions 34-43 (DLRTTGRGES) are enriched in basic and acidic residues. The segment at 34-58 (DLRTTGRGESPDSTGPDSDTLRRDD) is disordered. Position 76 is a leucine amide (Leu76). The propeptide occupies 80–127 (TIAADLHDDLVEEFDAEPLGYAGEPPQKLATELVQGAPYMVLLVTAKP). The tract at residues 132-163 (PIFYHTTSPRLGRRDSVGENHQRPPFAPRLGR) is disordered. Leu142 is modified (leucine amide). The segment covering 143–153 (GRRDSVGENHQ) has biased composition (basic and acidic residues). A leucine amide mark is found at Leu161 and Leu171. Positions 174–187 (SYNGGYPLPFQFAY) are excised as a propeptide.

The protein belongs to the pyrokinin family.

The protein localises to the secreted. In terms of biological role, a hormone that controls sex pheromone production in females and pheromone responsiveness in male. Also mediates visceral muscle contractile activity (myotropic activity). In Anopheles gambiae (African malaria mosquito), this protein is PBAN-type neuropeptides.